The chain runs to 273 residues: Putative ABC transporter ATP-binding protein DVU_1056 (273 aa).

In terms of domain architecture, ABC transporter spans 10–242 (LSLDDIHFTY…IHHGGEVAHE (233 aa)). 44–51 (GHNGSGKT) provides a ligand contact to ATP. A disordered region spans residues 234 to 273 (HHGGEVAHEHPSRGCCHQHDGSHHHAGHDDDHPHTSQTTE). The span at 235–267 (HGGEVAHEHPSRGCCHQHDGSHHHAGHDDDHPH) shows a compositional bias: basic and acidic residues.

It belongs to the ABC transporter superfamily.

Its subcellular location is the cell inner membrane. Functionally, probably part of an ABC transporter complex. Responsible for energy coupling to the transport system. The polypeptide is Putative ABC transporter ATP-binding protein DVU_1056 (Nitratidesulfovibrio vulgaris (strain ATCC 29579 / DSM 644 / CCUG 34227 / NCIMB 8303 / VKM B-1760 / Hildenborough) (Desulfovibrio vulgaris)).